The primary structure comprises 434 residues: F-box/LRR-repeat protein 21 (434 aa).

Positions 39–85 constitute an F-box domain; sequence RLDWGSLPHRVVLCVFQYLPLIDRARASSVCRRWNEVFHIPDLWRKF. LRR repeat units lie at residues 140–165, 187–213, 214–239, 242–265, 322–347, 349–374, and 375–400; these read LVNC…SKSH, DTPV…KMSS, CPHV…ALNY, LSDE…RIDV, GRSV…VVCA, GIQV…GLSE, and CEVS…SIME.

Part of the SCF (SKP1-CUL1-F-box) E3 ubiquitin-protein ligase complex SCF(FBXL21) composed of CUL1, SKP1, RBX1 and FBXL21. Interacts with CRY2. Interacts with CRY1. Expressed in the adenohypophysis, hypothalamus (especially in the suprachiasmatic nucleus or nuclei, SCN) and pineal, all neuroendocrine structures associated with timing and homeostasis.

The protein resides in the cytoplasm. The protein localises to the cytosol. Its subcellular location is the nucleus. Its pathway is protein modification; protein ubiquitination. Substrate-recognition component of the SCF(FBXL21) E3 ubiquitin ligase complex involved in circadian rhythm function. Plays a key role in the maintenance of both the speed and the robustness of the circadian clock oscillation. The SCF(FBXL21) complex mainly acts in the cytosol and mediates ubiquitination of CRY proteins (CRY1 and CRY2), leading to CRY proteins stabilization. The SCF(FBXL21) complex counteracts the activity of the SCF(FBXL3) complex and protects CRY proteins from degradation. Involved in the hypothalamic suprachiasmatic nucleus (SCN) clock regulating temporal organization of the daily activities. The polypeptide is F-box/LRR-repeat protein 21 (Fbxl21) (Ovis aries (Sheep)).